Consider the following 166-residue polypeptide: SPbeta prophage-derived uncharacterized protein YomO (166 aa).

The sequence is that of SPbeta prophage-derived uncharacterized protein YomO (yomO) from Bacillus subtilis (strain 168).